The chain runs to 176 residues: Japanin (176 aa).

The signal sequence occupies residues 1–24 (MKVLRCLVCSFYIIVSLITTMTIG). Glu47 contributes to the cholesterol binding site. Cystine bridges form between Cys52–Cys174 and Cys138–Cys162. Asn59 and Asn155 each carry an N-linked (GlcNAc...) asparagine glycan.

This sequence belongs to the calycin superfamily. Lipocalin family. Homodimer; non-disulfide-linked. Each monomer accommodates one molecule of cholesterol in a pocket. As to expression, expressed in salivary glands.

The protein localises to the secreted. In terms of biological role, salivary tick protein that modulates host immune response. This protein blocks dendritic cell (DC) differentiation from monocytes. In addition, it inhibits up-regulation of costimulatory molecules and pro-inflammatory cytokines in response to stimuli and promotes up-regulation of co-inhibitory molecules and the anti-inflammatory cytokine interleukin-10. It has a pocket to accomodate cholesterol, which may have immune-modulatory roles, either directly or through interactions with the host gut microbiota. The polypeptide is Japanin (Rhipicephalus appendiculatus (Brown ear tick)).